The sequence spans 200 residues: ATP-dependent Clp protease proteolytic subunit 2 (200 aa).

Catalysis depends on serine 96, which acts as the Nucleophile. Histidine 121 is an active-site residue.

The protein belongs to the peptidase S14 family. In terms of assembly, fourteen ClpP subunits assemble into 2 heptameric rings which stack back to back to give a disk-like structure with a central cavity, resembling the structure of eukaryotic proteasomes.

The protein localises to the cytoplasm. The catalysed reaction is Hydrolysis of proteins to small peptides in the presence of ATP and magnesium. alpha-casein is the usual test substrate. In the absence of ATP, only oligopeptides shorter than five residues are hydrolyzed (such as succinyl-Leu-Tyr-|-NHMec, and Leu-Tyr-Leu-|-Tyr-Trp, in which cleavage of the -Tyr-|-Leu- and -Tyr-|-Trp bonds also occurs).. In terms of biological role, cleaves peptides in various proteins in a process that requires ATP hydrolysis. Has a chymotrypsin-like activity. Plays a major role in the degradation of misfolded proteins. The polypeptide is ATP-dependent Clp protease proteolytic subunit 2 (Synechococcus sp. (strain JA-2-3B'a(2-13)) (Cyanobacteria bacterium Yellowstone B-Prime)).